The primary structure comprises 217 residues: Probable glutathione S-transferase DHAR4 (217 aa).

2 residues coordinate glutathione: K8 and D19. L-ascorbate-binding residues include K8 and D19. The 76-residue stretch at 10-85 (ASGAPDVLGD…DLIVGIIEEK (76 aa)) folds into the GST N-terminal domain. The active-site Nucleophile is the C20. A Glutathione-binding motif is present at residues 20–25 (CPFGQR). K47, S75, H164, and W211 together coordinate glutathione. The GST C-terminal domain occupies 86–217 (YPEPSLVTFP…IASWAPKLDV (132 aa)). K214 is a binding site for L-ascorbate.

The protein belongs to the GST superfamily. DHAR family. In terms of assembly, monomer.

Its subcellular location is the cytoplasm. The protein localises to the cytosol. The enzyme catalyses RX + glutathione = an S-substituted glutathione + a halide anion + H(+). It catalyses the reaction L-dehydroascorbate + 2 glutathione = glutathione disulfide + L-ascorbate. In terms of biological role, exhibits glutathione-dependent thiol transferase and dehydroascorbate (DHA) reductase activities. This Arabidopsis thaliana (Mouse-ear cress) protein is Probable glutathione S-transferase DHAR4 (DHAR4).